Here is a 474-residue protein sequence, read N- to C-terminus: MSKKLLIKTWGCQMNEYDSSKMADLLNAANGYELTEEPEEADVLLLNTCSIREKAQEKVFHQLGRWKTLKDKKPGVVIGVGGCVATQEGDHIRERAPFVDVIFGPQTLHRLPEMIKQSQSEDAPVMDISFPEIEKFDSLPEPRAEGATAFVSIMEGCSKYCTYCVVPYTRGEEVSRPMDDVLYEIAQLAEQGVREVNLLGQNVNAYRGPMHDGEICSFAELLRLVASIDGIDRIRFTTSHPLEFTDDIIAVYEDTPELVSFLHLPVQSGSDRILTMMKRPHTGIEYKSIIRKLRKARPDIQISSDFIVGFPGETDKDFQDTMKLIKDVDFDMSFSFIFSPRPGTPAADYPCDLSEETKKERLYELQQQINAQAMRYSRLMLGTEQRVLVEGPSKKNLMELRARTENNRVVNFEGSADLIGQFVDVKITDVFANSLRGEIVRTEKDMDLRSVISPTQMMAKTRREDELGVATFTP.

The MTTase N-terminal domain occupies 3-120; sequence KKLLIKTWGC…LPEMIKQSQS (118 aa). The [4Fe-4S] cluster site is built by C12, C49, C83, C157, C161, and C164. In terms of domain architecture, Radical SAM core spans 143-375; it reads RAEGATAFVS…QQQINAQAMR (233 aa). In terms of domain architecture, TRAM spans 378–441; it reads RLMLGTEQRV…ANSLRGEIVR (64 aa).

The protein belongs to the methylthiotransferase family. MiaB subfamily. In terms of assembly, monomer. [4Fe-4S] cluster serves as cofactor.

The protein resides in the cytoplasm. It carries out the reaction N(6)-dimethylallyladenosine(37) in tRNA + (sulfur carrier)-SH + AH2 + 2 S-adenosyl-L-methionine = 2-methylsulfanyl-N(6)-dimethylallyladenosine(37) in tRNA + (sulfur carrier)-H + 5'-deoxyadenosine + L-methionine + A + S-adenosyl-L-homocysteine + 2 H(+). Catalyzes the methylthiolation of N6-(dimethylallyl)adenosine (i(6)A), leading to the formation of 2-methylthio-N6-(dimethylallyl)adenosine (ms(2)i(6)A) at position 37 in tRNAs that read codons beginning with uridine. This is tRNA-2-methylthio-N(6)-dimethylallyladenosine synthase from Vibrio vulnificus (strain YJ016).